The following is a 445-amino-acid chain: Phosphoglucosamine mutase (445 aa).

The active-site Phosphoserine intermediate is the Ser-99. Residues Ser-99, Asp-242, Asp-244, and Asp-246 each coordinate Mg(2+). Residue Ser-99 is modified to Phosphoserine.

Belongs to the phosphohexose mutase family. Mg(2+) is required as a cofactor. Activated by phosphorylation.

The catalysed reaction is alpha-D-glucosamine 1-phosphate = D-glucosamine 6-phosphate. In terms of biological role, catalyzes the conversion of glucosamine-6-phosphate to glucosamine-1-phosphate. This chain is Phosphoglucosamine mutase, found in Sulfurovum sp. (strain NBC37-1).